Here is a 475-residue protein sequence, read N- to C-terminus: Ribulose bisphosphate carboxylase large chain (475 aa).

Residues 1–2 (MS) constitute a propeptide that is removed on maturation. The residue at position 3 (Pro3) is an N-acetylproline. Residue Lys14 is modified to N6,N6,N6-trimethyllysine. Substrate-binding residues include Asn123 and Thr173. Catalysis depends on Lys175, which acts as the Proton acceptor. A substrate-binding site is contributed by Lys177. 3 residues coordinate Mg(2+): Lys201, Asp203, and Glu204. The residue at position 201 (Lys201) is an N6-carboxylysine. The active-site Proton acceptor is His294. Substrate contacts are provided by Arg295, His327, and Ser379.

Belongs to the RuBisCO large chain family. Type I subfamily. In terms of assembly, heterohexadecamer of 8 large chains and 8 small chains; disulfide-linked. The disulfide link is formed within the large subunit homodimers. Mg(2+) is required as a cofactor. The disulfide bond which can form in the large chain dimeric partners within the hexadecamer appears to be associated with oxidative stress and protein turnover.

The protein resides in the plastid. The protein localises to the chloroplast. The catalysed reaction is 2 (2R)-3-phosphoglycerate + 2 H(+) = D-ribulose 1,5-bisphosphate + CO2 + H2O. It catalyses the reaction D-ribulose 1,5-bisphosphate + O2 = 2-phosphoglycolate + (2R)-3-phosphoglycerate + 2 H(+). RuBisCO catalyzes two reactions: the carboxylation of D-ribulose 1,5-bisphosphate, the primary event in carbon dioxide fixation, as well as the oxidative fragmentation of the pentose substrate in the photorespiration process. Both reactions occur simultaneously and in competition at the same active site. This chain is Ribulose bisphosphate carboxylase large chain, found in Populus tremuloides (Quaking aspen).